The chain runs to 427 residues: Serine--tRNA ligase (427 aa).

L-serine is bound at residue 230–232 (TAE). Position 261 to 263 (261 to 263 (RAE)) interacts with ATP. Glu284 is a binding site for L-serine. 348–351 (EISS) lines the ATP pocket. Ser384 serves as a coordination point for L-serine.

Belongs to the class-II aminoacyl-tRNA synthetase family. Type-1 seryl-tRNA synthetase subfamily. Homodimer. The tRNA molecule binds across the dimer.

It localises to the cytoplasm. It carries out the reaction tRNA(Ser) + L-serine + ATP = L-seryl-tRNA(Ser) + AMP + diphosphate + H(+). The enzyme catalyses tRNA(Sec) + L-serine + ATP = L-seryl-tRNA(Sec) + AMP + diphosphate + H(+). Its pathway is aminoacyl-tRNA biosynthesis; selenocysteinyl-tRNA(Sec) biosynthesis; L-seryl-tRNA(Sec) from L-serine and tRNA(Sec): step 1/1. Functionally, catalyzes the attachment of serine to tRNA(Ser). Is also able to aminoacylate tRNA(Sec) with serine, to form the misacylated tRNA L-seryl-tRNA(Sec), which will be further converted into selenocysteinyl-tRNA(Sec). The polypeptide is Serine--tRNA ligase (Syntrophomonas wolfei subsp. wolfei (strain DSM 2245B / Goettingen)).